The following is a 329-amino-acid chain: GMP reductase (329 aa).

Cys-178 serves as the catalytic Thioimidate intermediate. Position 207–230 (207–230 (IIADGGIRNNGDIAKSIRFGATMC)) interacts with NADP(+).

It belongs to the IMPDH/GMPR family. GuaC type 2 subfamily.

The enzyme catalyses IMP + NH4(+) + NADP(+) = GMP + NADPH + 2 H(+). Catalyzes the irreversible NADPH-dependent deamination of GMP to IMP. It functions in the conversion of nucleobase, nucleoside and nucleotide derivatives of G to A nucleotides, and in maintaining the intracellular balance of A and G nucleotides. This Lacticaseibacillus casei (strain BL23) (Lactobacillus casei) protein is GMP reductase.